The primary structure comprises 210 residues: Guanylate kinase (210 aa).

Positions 6–184 constitute a Guanylate kinase-like domain; the sequence is GNIYIVVAPS…ARLDLISIVR (179 aa). 13 to 20 is a binding site for ATP; that stretch reads APSGAGKT.

The protein belongs to the guanylate kinase family.

It localises to the cytoplasm. The enzyme catalyses GMP + ATP = GDP + ADP. In terms of biological role, essential for recycling GMP and indirectly, cGMP. The chain is Guanylate kinase from Chromobacterium violaceum (strain ATCC 12472 / DSM 30191 / JCM 1249 / CCUG 213 / NBRC 12614 / NCIMB 9131 / NCTC 9757 / MK).